The sequence spans 288 residues: MKQTRNFDEWLSTMTDTVADWTYYTDFPKVYKNVSSIKVALNIMNSLIGSKNIQEDFLDLYQNYPEILKVVPLLIAKRLRDTIIVKDPIKDFYFDFSKRNYSIEEYTMFLEKSGIFDLLQNHLVSNLVDYVTGVEVGMDTNGRKNRTGDAMENIVQSYLEAEGYILGENLFKEIEQNEIEEIFSVDLSAITNDGNTVKRFDFVIKNEQVLYLIEVNFYSGSGSKLNETARSYKMIAEETKAIPNVEFMWITDGQGWYKAKNNLRETFDILPFLYNINDLEHNILKNLK.

This sequence belongs to the DpnII type II restriction endonuclease family. Homodimer.

It catalyses the reaction Endonucleolytic cleavage of DNA to give specific double-stranded fragments with terminal 5'-phosphates.. A P subtype restriction enzyme that recognizes the double-stranded unmethylated sequence 5'-GATC-3' and cleaves before G-1. The polypeptide is Type II restriction enzyme DpnII (Streptococcus pneumoniae).